The primary structure comprises 323 residues: tRNA dimethylallyltransferase (323 aa).

Position 18-25 (18-25 (GPTASGKS)) interacts with ATP. 20–25 (TASGKS) is a substrate binding site. Interaction with substrate tRNA regions lie at residues 43–46 (DSAQ), 167–171 (QRIQR), and 249–254 (RCVGYR).

This sequence belongs to the IPP transferase family. Monomer. It depends on Mg(2+) as a cofactor.

It carries out the reaction adenosine(37) in tRNA + dimethylallyl diphosphate = N(6)-dimethylallyladenosine(37) in tRNA + diphosphate. In terms of biological role, catalyzes the transfer of a dimethylallyl group onto the adenine at position 37 in tRNAs that read codons beginning with uridine, leading to the formation of N6-(dimethylallyl)adenosine (i(6)A). This is tRNA dimethylallyltransferase from Nitrosospira multiformis (strain ATCC 25196 / NCIMB 11849 / C 71).